The following is a 474-amino-acid chain: Pyoverdine export outer membrane protein OpmQ (474 aa).

Positions 1-17 (MSMKNLSLISACLLLGA) are cleaved as a signal peptide. Cys18 is lipidated: N-palmitoyl cysteine. Residue Cys18 is the site of S-diacylglycerol cysteine attachment.

The protein belongs to the outer membrane factor (OMF) (TC 1.B.17) family. As to quaternary structure, part of the tripartite efflux system PvdRT-OpmQ, which is composed of an inner membrane component with both ATPase and permease domains, PvdT, a periplasmic membrane fusion protein, PvdR, and an outer membrane component, OpmQ.

It is found in the cell outer membrane. In terms of biological role, part of the tripartite efflux system PvdRT-OpmQ required for the secretion into the extracellular milieu of the siderophore pyoverdine (PVD), which is involved in iron acquisition. The system is responsible for export of newly synthesized PVD after the final steps of biosynthesis have taken place in the periplasm. It is also responsible for recycling of PVD after internalization of ferri-PVD into the periplasm by the outer-membrane receptor FpvA and release of iron from PVD, thus making PVD available for new cycles of iron uptake. In addition, can expel unwanted metals complexed with PVD from the periplasm into the extracellular medium. This is Pyoverdine export outer membrane protein OpmQ from Pseudomonas aeruginosa (strain ATCC 15692 / DSM 22644 / CIP 104116 / JCM 14847 / LMG 12228 / 1C / PRS 101 / PAO1).